We begin with the raw amino-acid sequence, 370 residues long: Protein SHI RELATED SEQUENCE 1 (370 aa).

A disordered region spans residues 1-37; it reads MAGFFSLDGGGGGGGGGGNNQEDHRSNTNPPPPVSEA. Residues 8 to 19 are compositionally biased toward gly residues; the sequence is DGGGGGGGGGGN. Residues Cys144, Cys147, Cys155, Cys160, Cys164, and Cys171 each coordinate Zn(2+). A DNA-binding region (zn(2)-C6 fungal-type; degenerate) is located at residues 144-171; the sequence is CQDCGNQAKKDCSHMRCRTCCKSRGFEC. Positions 271–274 match the Required for homo- and heterodimerization motif; that stretch reads IGGH.

It belongs to the SHI protein family. As to quaternary structure, forms homodimers and heterodimers with LRP1. In terms of tissue distribution, expressed in flowers, seeds and seedlings.

The protein resides in the nucleus. Transcription activator that binds DNA on 5'-ACTCTAC-3' and promotes auxin homeostasis-regulating gene expression (e.g. YUC genes), as well as genes affecting stamen development, cell expansion and timing of flowering. Synergistically with other SHI-related proteins, regulates gynoecium, stamen and leaf development in a dose-dependent manner, controlling apical-basal patterning. Promotes style and stigma formation, and influences vascular development during gynoecium development. May also have a role in the formation and/or maintenance of the shoot apical meristem (SAM). The sequence is that of Protein SHI RELATED SEQUENCE 1 (SRS1) from Arabidopsis thaliana (Mouse-ear cress).